Here is a 1150-residue protein sequence, read N- to C-terminus: ATP-dependent helicase/deoxyribonuclease subunit B (1150 aa).

Glycine 8 to serine 15 contributes to the ATP binding site. [4Fe-4S] cluster is bound by residues cysteine 789, cysteine 1108, cysteine 1111, and cysteine 1117.

The protein belongs to the helicase family. AddB/RexB type 1 subfamily. Heterodimer of AddA and AddB. The cofactor is Mg(2+). Requires [4Fe-4S] cluster as cofactor.

Functionally, the heterodimer acts as both an ATP-dependent DNA helicase and an ATP-dependent, dual-direction single-stranded exonuclease. Recognizes the chi site generating a DNA molecule suitable for the initiation of homologous recombination. The AddB subunit has 5' -&gt; 3' nuclease activity but not helicase activity. The chain is ATP-dependent helicase/deoxyribonuclease subunit B from Clostridium tetani (strain Massachusetts / E88).